The sequence spans 105 residues: Small ribosomal subunit protein bS6 (105 aa).

Belongs to the bacterial ribosomal protein bS6 family.

Its function is as follows. Binds together with bS18 to 16S ribosomal RNA. This is Small ribosomal subunit protein bS6 from Lawsonia intracellularis (strain PHE/MN1-00).